Consider the following 187-residue polypeptide: Peptidyl-tRNA hydrolase (187 aa).

Residue Tyr-14 coordinates tRNA. His-19 (proton acceptor) is an active-site residue. TRNA is bound by residues Tyr-64, Asn-66, and Asn-112.

The protein belongs to the PTH family. In terms of assembly, monomer.

It is found in the cytoplasm. The catalysed reaction is an N-acyl-L-alpha-aminoacyl-tRNA + H2O = an N-acyl-L-amino acid + a tRNA + H(+). Hydrolyzes ribosome-free peptidyl-tRNAs (with 1 or more amino acids incorporated), which drop off the ribosome during protein synthesis, or as a result of ribosome stalling. Functionally, catalyzes the release of premature peptidyl moieties from peptidyl-tRNA molecules trapped in stalled 50S ribosomal subunits, and thus maintains levels of free tRNAs and 50S ribosomes. This chain is Peptidyl-tRNA hydrolase, found in Clostridium acetobutylicum (strain ATCC 824 / DSM 792 / JCM 1419 / IAM 19013 / LMG 5710 / NBRC 13948 / NRRL B-527 / VKM B-1787 / 2291 / W).